The primary structure comprises 502 residues: Neuronal acetylcholine receptor subunit alpha-7 (502 aa).

An N-terminal signal peptide occupies residues 1–23 (MGLRALMLWLLAAAGLVRESLQG). Over 24-233 (EFQRKLYKEL…VTMRRRTLYY (210 aa)) the chain is Extracellular. Ca(2+) contacts are provided by Arg42 and Val44. N-linked (GlcNAc...) asparagine glycans are attached at residues Asn46, Asn90, and Asn133. Cys150 and Cys164 form a disulfide bridge. Residues Thr172 and Tyr210 each contribute to the Ca(2+) site. Cys212 and Cys213 form a disulfide bridge. 3 helical membrane-spanning segments follow: residues 234–254 (GLNL…VFLL), 262–282 (ISLG…VAEI), and 295–315 (QYFA…VIVL). The Cytoplasmic portion of the chain corresponds to 316–469 (QYHHHDPDGG…WKFAASVVDR (154 aa)). A helical membrane pass occupies residues 470-490 (LCLMAFSVFTIICTIGILMSA).

This sequence belongs to the ligand-gated ion channel (TC 1.A.9) family. Acetylcholine receptor (TC 1.A.9.1) subfamily. Alpha-7/CHRNA7 sub-subfamily. In terms of assembly, homopentamer. Can also form heteropentamers with CHRNB2, mainly found in basal forebrain cholinergic neurons.

The protein localises to the postsynaptic cell membrane. Its subcellular location is the cell membrane. The catalysed reaction is Ca(2+)(in) = Ca(2+)(out). It carries out the reaction K(+)(in) = K(+)(out). It catalyses the reaction Na(+)(in) = Na(+)(out). The enzyme catalyses choline(out) = choline(in). The catalysed reaction is NH4(+)(in) = NH4(+)(out). It carries out the reaction L-arginine(in) = L-arginine(out). It catalyses the reaction guanidine(out) = guanidine(in). Its activity is regulated as follows. Activated by a myriad of ligands such as acetylcholine, cytisine, nicotine, choline and epibatidine. Activity is modulated by positive allosteric modulators (PAMs), such as flavonoids, with a wide range of chemical diversity, pharmacological sensitivity and efficacy. AChR activity is inhibited by the antagonists alpha-conotoxons RgIA, ImI and ImII, small disulfide-constrained peptides from cone snails. Functionally, component of neuronal acetylcholine receptors (nAChRs) that function as pentameric, ligand-gated cation channels with high calcium permeability among other activities. nAChRs are excitatory neurotrasnmitter receptors formed by a collection of nAChR subunits known to mediate synaptic transmission in the nervous system and the neuromuscular junction. Each nAchR subunit confers differential attributes to channel properties, including activation, deactivation and desensitization kinetics, pH sensitivity, cation permeability, and binding to allosteric modulators. CHRNA7 is an homooligomeric neuronal acetylcholine receptor abundantly expressed in the central nervous system. Characterized by a fast desensitization and high calcium permeability. Also expressed in non-neuronal cells such as immune cells like lymphocytes, monocytes and macrophages. In Gallus gallus (Chicken), this protein is Neuronal acetylcholine receptor subunit alpha-7 (CHRNA7).